A 1276-amino-acid chain; its full sequence is Probable outer membrane protein pmp6 (1276 aa).

A signal peptide spans 1 to 23 (MKYSLPWLLTSSALVFSLHPLMA). The Autotransporter domain maps to 981-1276 (DAPSHPGIWI…NANCGTRYSF (296 aa)).

It belongs to the PMP outer membrane protein family.

It is found in the secreted. It localises to the cell wall. The protein localises to the cell outer membrane. The chain is Probable outer membrane protein pmp6 (pmp6) from Chlamydia pneumoniae (Chlamydophila pneumoniae).